The sequence spans 60 residues: Large ribosomal subunit protein bL32 (60 aa).

Positions M1 to R16 are enriched in basic residues. The interval M1–D20 is disordered.

This sequence belongs to the bacterial ribosomal protein bL32 family.

This chain is Large ribosomal subunit protein bL32, found in Geobacter metallireducens (strain ATCC 53774 / DSM 7210 / GS-15).